The primary structure comprises 476 residues: METLQMGLLSRSALFKYIIIFLIMINTRGYVLASQEQEAKTSVPEERQVGVTQNKIMTAQYECYQKIMQEPAHGKEGQFCNRTWDGWLCWGDVAAGIISEQRCPDYFQDFDPSEKVTKECGKNGHWFRHPDSNRTWTNYTRCNTFTHEKVKTALNLYYLTIIGHGLSIASLLISLGIFFYFKNLSCQRITLHKNLFFSFVCNSIITIISLSAVANNQALVATNPVICKISQFIHLYLMGCNYFWMLCEGIYLHTLIVVAVFAEKQHLMWYYLLGWGFPLIPACIHAVARSLYYNDNCWISSETHLLYIIHGPICAALLVNLFFLLNIVRVLITKLKVTHQAESNLYMKAVRATLILVPLLGIEFVLFPWKPEGRIAEEIYDYVMHILMHYQGLLVATIFCFFNGEVQAVLKRHWNQYRIQFGSFAHSEGLRSASYTVSSISEIQGTTYTHDYSEHSNGKNCHDMENVFFKTEKQYM.

The first 33 residues, 1–33 (METLQMGLLSRSALFKYIIIFLIMINTRGYVLA), serve as a signal peptide directing secretion. Residues 34 to 154 (SQEQEAKTSV…FTHEKVKTAL (121 aa)) are Extracellular-facing. 3 disulfides stabilise this stretch: cysteine 63–cysteine 89, cysteine 80–cysteine 120, and cysteine 103–cysteine 142. 3 N-linked (GlcNAc...) asparagine glycosylation sites follow: asparagine 81, asparagine 133, and asparagine 138. The chain crosses the membrane as a helical span at residues 155-179 (NLYYLTIIGHGLSIASLLISLGIFF). The Cytoplasmic portion of the chain corresponds to 180-190 (YFKNLSCQRIT). A helical membrane pass occupies residues 191 to 213 (LHKNLFFSFVCNSIITIISLSAV). Residues 214-224 (ANNQALVATNP) are Extracellular-facing. A helical transmembrane segment spans residues 225–253 (VICKISQFIHLYLMGCNYFWMLCEGIYLH). Over 254 to 267 (TLIVVAVFAEKQHL) the chain is Cytoplasmic. A helical membrane pass occupies residues 268–288 (MWYYLLGWGFPLIPACIHAVA). At 289-304 (RSLYYNDNCWISSETH) the chain is on the extracellular side. A helical membrane pass occupies residues 305–329 (LLYIIHGPICAALLVNLFFLLNIVR). Residues 330-344 (VLITKLKVTHQAESN) are Cytoplasmic-facing. Residues 345–366 (LYMKAVRATLILVPLLGIEFVL) form a helical membrane-spanning segment. The Extracellular portion of the chain corresponds to 367 to 381 (FPWKPEGRIAEEIYD). A helical transmembrane segment spans residues 382–402 (YVMHILMHYQGLLVATIFCFF). The Cytoplasmic portion of the chain corresponds to 403–476 (NGEVQAVLKR…VFFKTEKQYM (74 aa)).

It belongs to the G-protein coupled receptor 2 family.

It is found in the cell membrane. Functionally, may function as G protein-coupled receptor for calcitonin-gene-related peptides and adrenomedullin. Specificity may be modulated by accessory proteins. May activate cAMP-dependent pathway. This is Calcitonin gene-related peptide type 1 receptor (calcrl) from Xenopus laevis (African clawed frog).